Consider the following 636-residue polypeptide: Sodium-dependent proline transporter (636 aa).

At 1–45 the chain is on the cytoplasmic side; that stretch reads MKKLQGAHLRKPVTPDLLMTPSDQGDVDLDVDFAAHRGNWTGKLD. At threonine 20 the chain carries Phosphothreonine. At serine 22 the chain carries Phosphoserine. The next 3 membrane-spanning stretches (helical) occupy residues 46–66, 74–93, and 117–137; these read FLLSCIGYCVGLGNVWRFPYR, AFLVPYFLMLAICGIPLFFL, and GAGAAMLLIVGLVAIYYNMII. The Extracellular portion of the chain corresponds to 138 to 214; it reads AYVLFYLFAS…QGIGSPGEIR (77 aa). N-linked (GlcNAc...) asparagine glycosylation is present at asparagine 182. The next 9 helical transmembrane spans lie at 215–233, 242–259, 295–312, 324–345, 378–397, 425–443, 459–479, 500–519, and 538–556; these read WNLCLCLLLAWVIVFLCIL, VVYFTATFPYLILLMLLV, IFYSLGVGFGGLLTFASY, FIVTLGNAITSILAGFAIFSVL, LPLSPFWSFLFFFMLLTLGL, VFSGLICVAMYLMGLILTT, SFGLMVVVITTCLAVTRVYGI, ACWLFLSPATLLALMVYSIV, and LGILMGLLSCLMIPAGMLV. At 557-636 the chain is on the cytoplasmic side; the sequence is AVLREEGSLW…EIAEEEESMM (80 aa). Phosphoserine is present on residues serine 573 and serine 582. Position 588 is a phosphothreonine (threonine 588). A Phosphotyrosine modification is found at tyrosine 591. Phosphoserine occurs at positions 598 and 600.

Belongs to the sodium:neurotransmitter symporter (SNF) (TC 2.A.22) family. SLC6A7 subfamily. In terms of tissue distribution, brain specific (at protein level). Highly expressed in hippocampus, corpus striatum and temporal cortex. Also expressed in frontal cortex, occipital cortex and, at lower levels, in cerebellum and parietal cortex (at protein level).

The protein resides in the synaptic cell membrane. The enzyme catalyses L-proline(out) + chloride(out) + 2 Na(+)(out) = L-proline(in) + chloride(in) + 2 Na(+)(in). The catalysed reaction is L-pipecolate(out) + chloride(out) + 2 Na(+)(out) = L-pipecolate(in) + chloride(in) + 2 Na(+)(in). Its function is as follows. Brain specific sodium (and chloride)-dependent proline transporter. Terminates the action of proline by its high affinity sodium-dependent reuptake into presynaptic terminals. The chain is Sodium-dependent proline transporter from Homo sapiens (Human).